The following is a 497-amino-acid chain: MKTQTTHAAEQHAAKRRWLNAHEEGYHKAMGNRQVQMIAIGGAIGTGLFLGAGARLQMAGPALALVYLICGIFSFFILRALGELVLHRPSSGSFVSYAREFLGEKAAYVAGWMYFINWAMTGIVDITAVALYMHYWGAFGDVPQWVFALGALTIVGTMNMIGVKWFAEMEFWFALIKVLAIVIFLVVGTIFLGTGQPLEGNATGFHLITDNGGFFPHGLLPALVLIQGVVFAFASIELVGTAAGECKDPQKMVPKAINSVIWRIGLFYVGSVVLLVLLLPWNAYQAGQSPFVTFFSKLGVPYIGSIMNIVVLTAALSSLNSGLYCTGRILRSMSMGGSAPKFMAKMSRQHVPYAGILATLVVYVVGVFLNYLVPSRVFEIVLNFASLGIIASWAFIMVCQMRLRQAIKEGKAADVSFKLPGAPFTSWLTLLFLLSVLVLMAFDYPNGTYTIASLPLIAILLVAGWFGVRRRVAEIHRTAPVTADSTESVVLKEEAAT.

12 helical membrane passes run 34 to 54, 58 to 78, 109 to 129, 146 to 166, 171 to 191, 219 to 239, 264 to 284, 298 to 318, 353 to 373, 378 to 398, 422 to 442, and 448 to 468; these read QVQM…GAGA, MAGP…FFIL, VAGW…ITAV, VFAL…VKWF, FWFA…GTIF, LLPA…IELV, IGLF…WNAY, LGVP…ALSS, YAGI…NYLV, FEIV…FIMV, APFT…LMAF, and TYTI…WFGV.

It belongs to the amino acid-polyamine-organocation (APC) superfamily. Amino acid transporter (AAT) (TC 2.A.3.1) family.

The protein resides in the cell inner membrane. The protein is L-asparagine permease (ansP) of Salmonella typhimurium (strain LT2 / SGSC1412 / ATCC 700720).